We begin with the raw amino-acid sequence, 150 residues long: Globin-2 A chain (150 aa).

A Blocked amino end (Val) modification is found at V2. The 141-residue stretch at 10–150 folds into the Globin domain; sequence CGSEAIKANL…ALVGVVQAAL (141 aa). H102 serves as a coordination point for heme b.

The protein belongs to the globin family. As to quaternary structure, heterotetramer of two alpha chains and two beta chains.

This chain is Globin-2 A chain, found in Anadara inaequivalvis (Inequivalve ark).